The chain runs to 78 residues: Large ribosomal subunit protein bL31 (78 aa).

The protein belongs to the bacterial ribosomal protein bL31 family. Type A subfamily. Part of the 50S ribosomal subunit.

Its function is as follows. Binds the 23S rRNA. In Rickettsia prowazekii (strain Madrid E), this protein is Large ribosomal subunit protein bL31.